A 1203-amino-acid chain; its full sequence is Regulator of telomere elongation helicase 1 (1203 aa).

One can recognise a Helicase ATP-binding domain in the interval 7-296 (NGVTVDFPFQ…ARVTQQGELQ (290 aa)). 42 to 49 (SPTGTGKT) contacts ATP. 4 residues coordinate [4Fe-4S] cluster: cysteine 145, cysteine 163, cysteine 172, and cysteine 207. The Nuclear localization signal motif lies at 151 to 167 (KKQESNHMQISLCRKKV). A DEAH box motif is present at residues 250–253 (DEAH). A Nuclear localization signal motif is present at residues 871-877 (QKGGRKK). 2 disordered regions span residues 998–1020 (QLDP…TSKG) and 1120–1203 (TTGK…RSKQ). Residues 1123–1134 (KDLELEGPRDES) are compositionally biased toward basic and acidic residues. Positions 1160 to 1167 (QSKISSFF) match the PIP-box motif. Residues 1169 to 1181 (QRPDESVRSDDTT) show a composition bias toward basic and acidic residues.

The protein belongs to the helicase family. RAD3/XPD subfamily. Interacts with TERF1. Interacts (via PIP-box) with PCNA; the interaction is direct and essential for suppressing telomere fragility. Interacts with MMS19; the interaction mediates the association of RTEL1 with the cytosolic iron-sulfur protein assembly (CIA) complex.

The protein localises to the nucleus. The enzyme catalyses ATP + H2O = ADP + phosphate + H(+). Functionally, a probable ATP-dependent DNA helicase implicated in telomere-length regulation, DNA repair and the maintenance of genomic stability. Acts as an anti-recombinase to counteract toxic recombination and limit crossover during meiosis. Regulates meiotic recombination and crossover homeostasis by physically dissociating strand invasion events and thereby promotes noncrossover repair by meiotic synthesis dependent strand annealing (SDSA) as well as disassembly of D loop recombination intermediates. Also disassembles T loops and prevents telomere fragility by counteracting telomeric G4-DNA structures, which together ensure the dynamics and stability of the telomere. The polypeptide is Regulator of telomere elongation helicase 1 (Rtel1) (Mus spretus (Western Mediterranean mouse)).